We begin with the raw amino-acid sequence, 73 residues long: Large ribosomal subunit protein eL20 (73 aa).

The protein belongs to the eukaryotic ribosomal protein eL20 family. As to quaternary structure, part of the 50S ribosomal subunit. Binds 23S rRNA.

This is Large ribosomal subunit protein eL20 from Methanococcus aeolicus (strain ATCC BAA-1280 / DSM 17508 / OCM 812 / Nankai-3).